Here is an 89-residue protein sequence, read N- to C-terminus: Small ribosomal subunit protein uS15 (89 aa).

This sequence belongs to the universal ribosomal protein uS15 family. Part of the 30S ribosomal subunit. Forms a bridge to the 50S subunit in the 70S ribosome, contacting the 23S rRNA.

Functionally, one of the primary rRNA binding proteins, it binds directly to 16S rRNA where it helps nucleate assembly of the platform of the 30S subunit by binding and bridging several RNA helices of the 16S rRNA. In terms of biological role, forms an intersubunit bridge (bridge B4) with the 23S rRNA of the 50S subunit in the ribosome. This chain is Small ribosomal subunit protein uS15, found in Laribacter hongkongensis (strain HLHK9).